The sequence spans 437 residues: UDP-N-acetylmuramate--L-alanine ligase (437 aa).

108–114 (GAHGKTS) contributes to the ATP binding site.

Belongs to the MurCDEF family.

The protein localises to the cytoplasm. The enzyme catalyses UDP-N-acetyl-alpha-D-muramate + L-alanine + ATP = UDP-N-acetyl-alpha-D-muramoyl-L-alanine + ADP + phosphate + H(+). It functions in the pathway cell wall biogenesis; peptidoglycan biosynthesis. Cell wall formation. This chain is UDP-N-acetylmuramate--L-alanine ligase, found in Staphylococcus carnosus (strain TM300).